The sequence spans 204 residues: Holliday junction branch migration complex subunit RuvA (204 aa).

Residues 1–64 form a domain I region; it reads MIGRLCGTAE…EDAITLFGFI (64 aa). Positions 65 to 143 are domain II; that stretch reads DAAERDWFRL…AMPTGSAFIP (79 aa). The flexible linker stretch occupies residues 144–154; that stretch reads TGTAPPVAPPQ. The tract at residues 154-204 is domain III; sequence QGKLADALSALVNLGYRRAEAEAALSAVQAEAGEDAALDELIRGGLRRLAR.

It belongs to the RuvA family. As to quaternary structure, homotetramer. Forms an RuvA(8)-RuvB(12)-Holliday junction (HJ) complex. HJ DNA is sandwiched between 2 RuvA tetramers; dsDNA enters through RuvA and exits via RuvB. An RuvB hexamer assembles on each DNA strand where it exits the tetramer. Each RuvB hexamer is contacted by two RuvA subunits (via domain III) on 2 adjacent RuvB subunits; this complex drives branch migration. In the full resolvosome a probable DNA-RuvA(4)-RuvB(12)-RuvC(2) complex forms which resolves the HJ.

The protein resides in the cytoplasm. Functionally, the RuvA-RuvB-RuvC complex processes Holliday junction (HJ) DNA during genetic recombination and DNA repair, while the RuvA-RuvB complex plays an important role in the rescue of blocked DNA replication forks via replication fork reversal (RFR). RuvA specifically binds to HJ cruciform DNA, conferring on it an open structure. The RuvB hexamer acts as an ATP-dependent pump, pulling dsDNA into and through the RuvAB complex. HJ branch migration allows RuvC to scan DNA until it finds its consensus sequence, where it cleaves and resolves the cruciform DNA. The chain is Holliday junction branch migration complex subunit RuvA from Acidiphilium cryptum (strain JF-5).